The chain runs to 124 residues: ATP synthase epsilon chain (124 aa).

This sequence belongs to the ATPase epsilon chain family. F-type ATPases have 2 components, CF(1) - the catalytic core - and CF(0) - the membrane proton channel. CF(1) has five subunits: alpha(3), beta(3), gamma(1), delta(1), epsilon(1). CF(0) has three main subunits: a, b and c.

The protein resides in the cell membrane. Functionally, produces ATP from ADP in the presence of a proton gradient across the membrane. The sequence is that of ATP synthase epsilon chain from Corynebacterium glutamicum (strain ATCC 13032 / DSM 20300 / JCM 1318 / BCRC 11384 / CCUG 27702 / LMG 3730 / NBRC 12168 / NCIMB 10025 / NRRL B-2784 / 534).